The primary structure comprises 471 residues: MPAKGVIQEIIGVVIRAKFPEDQVPEIYNAIEIPLEQGGRLVCEVQQQLGNGVVKAVAMGSTDGLRRGLEVIDTGRPIAVPVGPATLGRVFNVLGDPIDGGPPFGPEVERRPIHRDPPSFEEQSTQAQIFETGIKVIDLIAPFTRGGKTAIFGGAGVGKTVVIQELIANIAKEQSGFSVFAGVGERSREGNDLIHEMREARIDENTTVFDKTIMVFGQMNEPPGARLRVGLTALTMAEYFRDQGRDILLFIDNIFRFVQAGSEVSSLLGRMPSQVGYQPTLGTEMGELQERITSTKRGSITSMQAVYVPADDYTDPAPATVFSHLDATISLERSIAERAIFPAVDPLASTSRILDPNIVGEEHYRVAQEVKRVLQRYKDLKDIIAILGMEELSDEDKLTVQRARKIELFFSQPFTVAQQFTGRPGKYVPVKKTVESFARLLNGEGDHIPESFFYMQGDFDDVLAAYEASQK.

153–160 is an ATP binding site; that stretch reads GGAGVGKT.

It belongs to the ATPase alpha/beta chains family. F-type ATPases have 2 components, CF(1) - the catalytic core - and CF(0) - the membrane proton channel. CF(1) has five subunits: alpha(3), beta(3), gamma(1), delta(1), epsilon(1). CF(0) has four main subunits: a(1), b(1), b'(1) and c(9-12).

Its subcellular location is the cell membrane. It catalyses the reaction ATP + H2O + 4 H(+)(in) = ADP + phosphate + 5 H(+)(out). Functionally, produces ATP from ADP in the presence of a proton gradient across the membrane. The catalytic sites are hosted primarily by the beta subunits. The sequence is that of ATP synthase subunit beta from Chloroflexus aggregans (strain MD-66 / DSM 9485).